A 507-amino-acid chain; its full sequence is L-amino-acid oxidase (507 aa).

Positions 1-19 (MNVLFIFSLLFLAALESCA) are cleaved as a signal peptide. A disulfide bond links C29 and C192. Residues 62–63 (MA), 82–83 (EA), R90, and 106–109 (GPMR) each bind FAD. Position 109 (R109) interacts with substrate. N-linked (GlcNAc...) asparagine glycans are attached at residues N191 and N213. FAD is bound at residue V280. The cysteines at positions 348 and 429 are disulfide-linked. N378 carries an N-linked (GlcNAc...) asparagine glycan. Y389 serves as a coordination point for substrate. FAD-binding positions include E473 and 480–485 (GWIDST).

The protein belongs to the flavin monoamine oxidase family. FIG1 subfamily. In terms of assembly, homodimer; non-covalently linked. Requires FAD as cofactor. Expressed by the venom gland.

It is found in the secreted. It catalyses the reaction an L-alpha-amino acid + O2 + H2O = a 2-oxocarboxylate + H2O2 + NH4(+). The enzyme catalyses L-leucine + O2 + H2O = 4-methyl-2-oxopentanoate + H2O2 + NH4(+). Its function is as follows. Catalyzes an oxidative deamination of predominantly hydrophobic and aromatic L-amino acids, thus producing hydrogen peroxide that may contribute to the diverse toxic effects of this enzyme. Shows activity on L-Leu. Exhibits diverse biological activities, such as hemorrhage, hemolysis, edema, apoptosis of vascular endothelial cells or tumor cell lines, antibacterial and antiparasitic activities. This protein induces platelet aggregation by both hydrogen peroxide production and binding to platelet membrane proteins (that would enhance the sensitivity of platelets to hydrogen peroxide). Effects of snake L-amino oxidases on platelets are controversial, since they either induce aggregation or inhibit agonist-induced aggregation. These different effects are probably due to different experimental conditions. The chain is L-amino-acid oxidase from Naja atra (Chinese cobra).